Here is a 415-residue protein sequence, read N- to C-terminus: Esterase FrsA (415 aa).

Positions 1 to 23 (MANRNLSESLFKPRQKHQETSTL) are disordered.

This sequence belongs to the FrsA family.

The enzyme catalyses a carboxylic ester + H2O = an alcohol + a carboxylate + H(+). In terms of biological role, catalyzes the hydrolysis of esters. This Photorhabdus laumondii subsp. laumondii (strain DSM 15139 / CIP 105565 / TT01) (Photorhabdus luminescens subsp. laumondii) protein is Esterase FrsA.